The following is a 96-amino-acid chain: Small ribosomal subunit protein bS6 (96 aa).

It belongs to the bacterial ribosomal protein bS6 family.

Binds together with bS18 to 16S ribosomal RNA. In Streptococcus equi subsp. zooepidemicus (strain MGCS10565), this protein is Small ribosomal subunit protein bS6.